Consider the following 141-residue polypeptide: Hemoglobin subunit alpha (141 aa).

Residues 1–141 (VLSSTDKSNV…VSTVLTSKYR (141 aa)) form the Globin domain. At Ser-3 the chain carries Phosphoserine. Lys-7 and Lys-11 each carry N6-succinyllysine. Lys-16 carries the post-translational modification N6-acetyllysine; alternate. Residue Lys-16 is modified to N6-succinyllysine; alternate. Tyr-24 carries the post-translational modification Phosphotyrosine. Ser-35 carries the phosphoserine modification. Residue Lys-40 is modified to N6-succinyllysine. His-58 serves as a coordination point for O2. A heme b-binding site is contributed by His-87. Position 102 is a phosphoserine (Ser-102). Thr-108 carries the post-translational modification Phosphothreonine. A phosphoserine mark is found at Ser-124 and Ser-131. Phosphothreonine is present on residues Thr-134 and Thr-137. A Phosphoserine modification is found at Ser-138.

Belongs to the globin family. In terms of assembly, heterotetramer of two alpha chains and two beta chains. In terms of tissue distribution, red blood cells.

Functionally, involved in oxygen transport from the lung to the various peripheral tissues. Hemopressin acts as an antagonist peptide of the cannabinoid receptor CNR1. Hemopressin-binding efficiently blocks cannabinoid receptor CNR1 and subsequent signaling. This chain is Hemoglobin subunit alpha, found in Pteropus vampyrus (Large flying fox).